Consider the following 229-residue polypeptide: Orotidine 5'-phosphate decarboxylase (229 aa).

Substrate is bound by residues D12, K34, 61 to 70 (DWKLHDIGAT), T116, R177, Q186, G206, and R207. K63 functions as the Proton donor in the catalytic mechanism.

This sequence belongs to the OMP decarboxylase family. Type 1 subfamily. As to quaternary structure, homodimer.

The catalysed reaction is orotidine 5'-phosphate + H(+) = UMP + CO2. It participates in pyrimidine metabolism; UMP biosynthesis via de novo pathway; UMP from orotate: step 2/2. Catalyzes the decarboxylation of orotidine 5'-monophosphate (OMP) to uridine 5'-monophosphate (UMP). This chain is Orotidine 5'-phosphate decarboxylase, found in Caulobacter sp. (strain K31).